A 46-amino-acid polypeptide reads, in one-letter code: Crambin (46 aa).

Disulfide bonds link Cys-3–Cys-40, Cys-4–Cys-32, and Cys-16–Cys-26.

The protein belongs to the plant thionin (TC 1.C.44) family.

The protein resides in the secreted. Functionally, the function of this hydrophobic plant seed protein is not known. The sequence is that of Crambin (THI2) from Crambe hispanica subsp. abyssinica (Abyssinian kale).